The primary structure comprises 216 residues: GTP-binding nuclear protein spi1 (216 aa).

Residues 6 to 170 (NVPTFKLVLV…LWLARKLVGN (165 aa)) enclose the Small GTPase Ran-type domain. 17-24 (DGGTGKTT) provides a ligand contact to GTP. Residue Thr20 is modified to Phosphothreonine. Residues 36 to 44 (KKYIATLGV) form a switch-I region. Residues Gly67, 121–124 (NKVD), and 149–151 (SAK) each bind GTP. The switch-II stretch occupies residues 67–83 (GQEKLGGLRDGYYIQGQ).

This sequence belongs to the small GTPase superfamily. Ran family. In terms of assembly, oligomer of dis3, pim1 and spi1. Found in a nuclear export complex with RanGTP, exportin and pre-miRNA. Interacts with fft3.

It is found in the nucleus. GTP-binding protein involved in nucleocytoplasmic transport. Required for the import of protein into the nucleus and also for RNA export. The protein is GTP-binding nuclear protein spi1 (spi1) of Schizosaccharomyces pombe (strain 972 / ATCC 24843) (Fission yeast).